The sequence spans 204 residues: Recombination protein RecR (204 aa).

The C4-type zinc finger occupies 63-78; it reads CRICFNVADSELCPIC. One can recognise a Toprim domain in the interval 86–181; that stretch reads NKICVVEQPQ…KVTRLARGLP (96 aa).

It belongs to the RecR family.

Its function is as follows. May play a role in DNA repair. It seems to be involved in an RecBC-independent recombinational process of DNA repair. It may act with RecF and RecO. The protein is Recombination protein RecR of Dehalococcoides mccartyi (strain ATCC BAA-2266 / KCTC 15142 / 195) (Dehalococcoides ethenogenes (strain 195)).